Here is a 338-residue protein sequence, read N- to C-terminus: Aspartate-semialdehyde dehydrogenase (338 aa).

Residues 13-16 (TGNV) and 41-42 (NS) each bind NADP(+). Arginine 101 provides a ligand contact to phosphate. Cysteine 132 (acyl-thioester intermediate) is an active-site residue. Glutamine 159 contributes to the substrate binding site. Residue 162–163 (SG) participates in NADP(+) binding. Lysine 216 contributes to the phosphate binding site. Arginine 237 serves as a coordination point for substrate. Histidine 244 (proton acceptor) is an active-site residue. Asparagine 317 lines the NADP(+) pocket.

The protein belongs to the aspartate-semialdehyde dehydrogenase family. As to quaternary structure, homodimer.

The catalysed reaction is L-aspartate 4-semialdehyde + phosphate + NADP(+) = 4-phospho-L-aspartate + NADPH + H(+). The protein operates within amino-acid biosynthesis; L-lysine biosynthesis via DAP pathway; (S)-tetrahydrodipicolinate from L-aspartate: step 2/4. It participates in amino-acid biosynthesis; L-methionine biosynthesis via de novo pathway; L-homoserine from L-aspartate: step 2/3. Its pathway is amino-acid biosynthesis; L-threonine biosynthesis; L-threonine from L-aspartate: step 2/5. Catalyzes the NADPH-dependent formation of L-aspartate-semialdehyde (L-ASA) by the reductive dephosphorylation of L-aspartyl-4-phosphate. In Rickettsia bellii (strain RML369-C), this protein is Aspartate-semialdehyde dehydrogenase.